A 247-amino-acid polypeptide reads, in one-letter code: Segregation and condensation protein A (247 aa).

This sequence belongs to the ScpA family. In terms of assembly, component of a cohesin-like complex composed of ScpA, ScpB and the Smc homodimer, in which ScpA and ScpB bind to the head domain of Smc. The presence of the three proteins is required for the association of the complex with DNA.

It is found in the cytoplasm. Functionally, participates in chromosomal partition during cell division. May act via the formation of a condensin-like complex containing Smc and ScpB that pull DNA away from mid-cell into both cell halves. This chain is Segregation and condensation protein A, found in Lactobacillus johnsonii (strain CNCM I-12250 / La1 / NCC 533).